The following is a 152-amino-acid chain: MAKGVAVLNSSEGVTGTIFFTQEGDGVTTVSGTVSGLKPGLHGFHVHALGDTTNGCMSTGPHFNPDGKTHGAPEDANRHAGDLGNITVGDDGTATFTITDCQIPLTGPNSIVGRAVVVHADPDDLGKGGHELSLATGNAGGRVACGIIGLQG.

Residues histidine 45, histidine 47, and histidine 62 each contribute to the Cu cation site. Cysteines 56 and 145 form a disulfide. Residues histidine 62, histidine 70, histidine 79, and aspartate 82 each contribute to the Zn(2+) site. Histidine 119 provides a ligand contact to Cu cation.

Belongs to the Cu-Zn superoxide dismutase family. Homodimer. Interacts with DJ1A and CCS. Cu cation is required as a cofactor. The cofactor is Zn(2+). Expressed in leaves (at protein level). The spatial localization is regulated by miR398-mediated silencing. Mostly present in flowers, old rosette leaves and inflorescence, and, to a lower extent, in cauline leaves, stems and roots.

It localises to the cytoplasm. It is found in the cytosol. The protein resides in the nucleus. It carries out the reaction 2 superoxide + 2 H(+) = H2O2 + O2. In terms of biological role, destroys radicals which are normally produced within the cells and which are toxic to biological systems. In Arabidopsis thaliana (Mouse-ear cress), this protein is Superoxide dismutase [Cu-Zn] 1 (CSD1).